The following is a 1624-amino-acid chain: Latent-transforming growth factor beta-binding protein 4 (1624 aa).

Residues 1–27 (MPRPGTSGRRPLLLVLLLPLFAAATSA) form the signal peptide. The disordered stretch occupies residues 125 to 146 (RRPRGPGGRGLLRRRPPQRAPA). An EGF-like 1 domain is found at 149–181 (APVLCPLICHNGGVCVKPDRCLCPPDFAGKFCQ). 6 disulfide bridges follow: C153/C163, C157/C169, C171/C180, C289/C311, C298/C324, and C312/C327. The TB 1 domain occupies 287–339 (GYCFRELRGGECASPLPGLRTQEVCCRGAGLAWGVHDCQLCSERLGNSERVSA). N352 is a glycosylation site (N-linked (GlcNAc...) asparagine). The region spanning 357–397 (DVDECATGGRCQHGECANTRGGYTCVCPDGFLLDSSRSSCI) is the EGF-like 2; calcium-binding domain. 7 disulfide bridges follow: C361/C372, C367/C381, C383/C396, C409/C431, C418/C444, C432/C447, and C433/C459. One can recognise a TB 2 domain in the interval 407 to 459 (GPCFRVLRDGGCSLPILRNITKQICCCSRVGKAWGRGCQLCPPFGSEGFREIC). N425 carries an N-linked (GlcNAc...) asparagine glycan. The segment at 474–546 (YNTRPLGQEP…PEIPESGPSS (73 aa)) is disordered. Residues 487-500 (SLSQPRTLPATSRP) are compositionally biased toward polar residues. A compositionally biased stretch (basic and acidic residues) spans 508 to 522 (HRLEPRPEPRPDPRP). The region spanning 545 to 586 (SSGMCQRNPQVCGPGRCISRPSGYTCACDSGFRLSPQGTRCI) is the EGF-like 3 domain. Disulfide bonds link C549-C561, C556-C570, C572-C585, C591-C603, C598-C612, C614-C627, C633-C645, C640-C654, C656-C669, C675-C687, C682-C696, C698-C707, C714-C726, C721-C735, C737-C750, C756-C768, C763-C777, C779-C792, C838-C851, C845-C860, C862-C876, C882-C894, C888-C903, C905-C918, C924-C935, C930-C944, C946-C959, C1053-C1065, C1059-C1074, and C1076-C1089. The EGF-like 4; calcium-binding domain occupies 587–628 (DVDECRRVPPPCAPGRCENSPGSFRCVCGPGFRAGPRAAECL). Positions 629–670 (DVDECHRVPPPCDLGRCENTPGSFLCVCPAGYQAAPHGASCQ) constitute an EGF-like 5; calcium-binding domain. The 38-residue stretch at 671–708 (DVDECTQSPGLCGRGACKNLPGSFRCVCPAGFRGSACE) folds into the EGF-like 6; calcium-binding domain. In terms of domain architecture, EGF-like 7; calcium-binding spans 710–751 (DVDECAQEPPPCGPGRCDNTAGSFHCACPAGFRSRGPGAPCQ). An EGF-like 8; calcium-binding domain is found at 752-793 (DVDECARSPPPCTYGRCENTEGSFQCVCPMGFQPNTAGSECE). In terms of domain architecture, EGF-like 9; calcium-binding spans 834–877 (DVDECSSGAPPCGPHGHCTNTEGSFRCSCAPGYRAPSGRPGPCA). Residues 878 to 919 (DVNECLEGDFCFPHGECLNTDGSFACTCAPGYRPGPRGASCL) form the EGF-like 10; calcium-binding domain. One can recognise an EGF-like 11; calcium-binding domain in the interval 920–960 (DVDECSEEDLCQSGICTNTDGSFECICPPGHRAGPDLASCL). One can recognise an EGF-like 12; calcium-binding domain in the interval 1049-1090 (DVDECRNRSFCGAHAVCQNLPGSFQCLCDQGYEGARDGRHCV). N1055 is a glycosylation site (N-linked (GlcNAc...) asparagine). The tract at residues 1130–1179 (GRCVPPRTSAGTFPGSQPQAPASPVLPARPPPPPLPRRPSTPRQGPVGSG) is disordered. Positions 1138-1149 (SAGTFPGSQPQA) are enriched in polar residues. Positions 1156–1168 (PARPPPPPLPRRP) are enriched in pro residues. Residues 1181-1235 (RECYFDTAAPDACDNILARNVTWQECCCTVGEGWGSGCRIQQCPGTETAEYQSLC) enclose the TB 3 domain. 10 cysteine pairs are disulfide-bonded: C1183-C1206, C1193-C1218, C1207-C1223, C1208-C1235, C1257-C1270, C1265-C1279, C1281-C1294, C1300-C1312, C1307-C1321, and C1323-C1336. N-linked (GlcNAc...) asparagine glycosylation is present at N1200. One can recognise an EGF-like 13; calcium-binding domain in the interval 1253–1295 (DVDECQLFRDQVCKSGVCVNTAPGYSCYCSNGYYYHTQRLECI). One can recognise an EGF-like 14; calcium-binding domain in the interval 1296 to 1337 (DNDECADEEPACEGGRCVNTVGSYHCTCEPPLVLDGSQRRCV). N1339 carries N-linked (GlcNAc...) asparagine glycosylation. A TB 4 domain is found at 1349–1402 (GVCWQEVGADLVCSHPRLDRQATYTECCCLYGEAWGMDCALCPAQDSDDFEALC). 4 cysteine pairs are disulfide-bonded: C1351–C1375, C1361–C1387, C1376–C1390, and C1377–C1402. Residues 1446–1458 (ALPYDPYPPPPGP) show a composition bias toward pro residues. Positions 1446–1524 (ALPYDPYPPP…PPEGGSYAGS (79 aa)) are disordered. Residues 1501–1510 (RSRDTRRSFP) show a composition bias toward basic and acidic residues. 2 consecutive EGF-like domains span residues 1533-1573 (EAEE…MACV) and 1574-1618 (DINE…HHCA). Intrachain disulfides connect C1537–C1548, C1543–C1557, C1559–C1572, C1578–C1593, C1588–C1602, and C1604–C1617.

Belongs to the LTBP family. Forms part of the large latent transforming growth factor beta precursor complex; removal is essential for activation of complex. Interacts with LTBP1 and TGFB1. Interacts with EFEMP2; this interaction promotes fibrillar deposition of EFEMP2. Contains hydroxylated asparagine residues. In terms of tissue distribution, highly expressed in heart, skeletal muscle, pancreas, uterus, and small intestine. Weakly expressed in placenta and lung.

It localises to the secreted. The protein resides in the extracellular space. It is found in the extracellular matrix. Its function is as follows. Key regulator of transforming growth factor beta (TGFB1, TGFB2 and TGFB3) that controls TGF-beta activation by maintaining it in a latent state during storage in extracellular space. Associates specifically via disulfide bonds with the Latency-associated peptide (LAP), which is the regulatory chain of TGF-beta, and regulates integrin-dependent activation of TGF-beta. The sequence is that of Latent-transforming growth factor beta-binding protein 4 (LTBP4) from Homo sapiens (Human).